The sequence spans 402 residues: L-threonine ammonia-lyase (402 aa).

Lys-51 bears the N6-(pyridoxal phosphate)lysine mark. Pyridoxal 5'-phosphate-binding positions include Asn-78, 178 to 181 (GGGL), and Ser-302. Residues 327 to 402 (KLKVELDDLP…GVGYLVDVLK (76 aa)) form the ACT domain.

It belongs to the serine/threonine dehydratase family. Pyridoxal 5'-phosphate is required as a cofactor.

The catalysed reaction is L-threonine = 2-oxobutanoate + NH4(+). It catalyses the reaction L-serine = pyruvate + NH4(+). It functions in the pathway amino-acid biosynthesis; L-isoleucine biosynthesis; 2-oxobutanoate from L-threonine: step 1/1. Functionally, catalyzes the conversion of threonine to 2-oxobutanoate and ammonia. Functions in the threonine-dependent pathway of isoleucine biosynthesis, which is the minor pathway for isoleucine biosynthesis in G.sulfurreducens. Also displays serine ammonia-lyase activity, yielding pyruvate from L-serine. This is L-threonine ammonia-lyase from Geobacter sulfurreducens (strain ATCC 51573 / DSM 12127 / PCA).